Reading from the N-terminus, the 1202-residue chain is Nitric oxide synthase 3 (1202 aa).

The disordered stretch occupies residues 1 to 70 (MGNLKSVGQE…PPDGPKFPRV (70 aa)). Gly-2 carries N-myristoyl glycine lipidation. S-palmitoyl cysteine attachment occurs at residues Cys-15 and Cys-26. Positions 15-27 (CGLGLGLGLGLCG) are enriched in gly residues. The span at 33–65 (SPAPEPSQAPVPPSPTRPAPDHSPPLTRPPDGP) shows a compositional bias: pro residues. Residues Cys-93 and Cys-98 each coordinate Zn(2+). The interaction with NOSIP stretch occupies residues 97-485 (RCLGSLVFPR…PDPWKGSAAK (389 aa)). Ser-101 lines the (6R)-L-erythro-5,6,7,8-tetrahydrobiopterin pocket. Position 183 (Cys-183) interacts with heme b. Residues Gln-246, Trp-355, Tyr-356, and Glu-360 each coordinate L-arginine. Residues Ala-445, Trp-446, and Phe-459 each coordinate (6R)-L-erythro-5,6,7,8-tetrahydrobiopterin. Tyr-474 is a binding site for heme b. Positions 489–509 (ITRKKTFKEVANAVKISASLM) are calmodulin-binding. At Thr-494 the chain carries Phosphothreonine; by AMPK. One can recognise a Flavodoxin-like domain in the interval 519–702 (ATILYGSETG…AFRGWAQAAF (184 aa)). FMN-binding residues include Ser-525, Glu-526, Thr-527, Arg-529, Ser-571, and Thr-572. Phosphoserine occurs at positions 614, 632, and 637. Residues Ser-653, Cys-660, Glu-686, and Gln-690 each contribute to the FMN site. Residues 755–1001 (RKMFQATILS…IRGAPSFRLP (247 aa)) enclose the FAD-binding FR-type domain. Arg-775 lines the NADP(+) pocket. FAD is bound at residue His-797. Residues 817-843 (EDPPPSTEPVAVEQLEKGSPGGPPPGW) are disordered. At Ser-835 the chain carries Phosphoserine. 9 residues coordinate FAD: Arg-937, Tyr-939, Ser-940, Thr-955, Ala-957, Tyr-961, Val-974, Cys-975, and Ser-976. NADP(+) is bound by residues Thr-1015, Arg-1048, Ser-1077, Arg-1078, Lys-1084, Tyr-1086, and Gln-1088. Thr-1174 carries the post-translational modification Phosphothreonine. Ser-1176 carries the post-translational modification Phosphoserine; by AMPK. A Phosphoserine modification is found at Ser-1178.

It belongs to the NOS family. As to quaternary structure, homodimer. Interacts with NOSIP and NOSTRIN. Interacts with HSP90AB1. Forms a complex with ASL, ASS1 and SLC7A1; the complex regulates cell-autonomous L-arginine synthesis and citrulline recycling while channeling extracellular L-arginine to nitric oxide synthesis pathway. It depends on heme b as a cofactor. The cofactor is FAD. FMN serves as cofactor. (6R)-L-erythro-5,6,7,8-tetrahydrobiopterin is required as a cofactor. Phosphorylation by AMPK at Ser-1176 in the presence of Ca(2+)-calmodulin (CaM) activates activity. In absence of Ca(2+)-calmodulin, AMPK also phosphorylates Thr-494, resulting in inhibition of activity. In terms of tissue distribution, expressed constitutively by vascular endothelium. Detected in alveolar and serosal epithelial cells as well as in endothelial cells in one day old rat. In adult lung, detected in rare endothelial cells.

The protein resides in the membrane. It is found in the caveola. The protein localises to the cytoplasm. Its subcellular location is the cytoskeleton. It localises to the golgi apparatus. The protein resides in the cell membrane. The enzyme catalyses 2 L-arginine + 3 NADPH + 4 O2 + H(+) = 2 L-citrulline + 2 nitric oxide + 3 NADP(+) + 4 H2O. With respect to regulation, stimulated by calcium/calmodulin. Inhibited by NOSIP and NOSTRIN. Functionally, produces nitric oxide (NO) which is implicated in vascular smooth muscle relaxation through a cGMP-mediated signal transduction pathway. NO mediates vascular endothelial growth factor (VEGF)-induced angiogenesis in coronary vessels and promotes blood clotting through the activation of platelets. This Rattus norvegicus (Rat) protein is Nitric oxide synthase 3.